The following is a 759-amino-acid chain: RNA-binding protein 28 (759 aa).

At alanine 2 the chain carries N-acetylalanine. The 77-residue stretch at leucine 4–lysine 80 folds into the RRM 1 domain. The disordered stretch occupies residues asparagine 84 to lysine 105. Basic and acidic residues predominate over residues lysine 85–glutamate 101. One can recognise an RRM 2 domain in the interval alanine 114–alanine 191. Phosphoserine is present on serine 122. Residues valine 201–aspartate 330 are disordered. Over residues glycine 205–glutamate 224 the composition is skewed to basic and acidic residues. Composition is skewed to acidic residues over residues glutamate 225–asparagine 256 and serine 284–glutamate 313. RRM domains are found at residues lysine 335 to threonine 419 and threonine 487 to glutamine 597. Residue serine 397 is modified to Phosphoserine. The disordered stretch occupies residues arginine 594 to serine 759. A compositionally biased stretch (basic and acidic residues) spans proline 615 to arginine 640. Lysine 653 is covalently cross-linked (Glycyl lysine isopeptide (Lys-Gly) (interchain with G-Cter in SUMO2)). The span at valine 689–lysine 698 shows a compositional bias: basic residues. The segment covering glutamine 700–glutamine 715 has biased composition (polar residues).

In terms of assembly, interacts with U1, U2, U4, U5, and U6 spliceosomal small nuclear RNAs (snRNAs). In terms of tissue distribution, ubiquitously expressed.

It localises to the nucleus. The protein localises to the nucleolus. Its function is as follows. Nucleolar component of the spliceosomal ribonucleoprotein complexes. This Homo sapiens (Human) protein is RNA-binding protein 28 (RBM28).